The sequence spans 290 residues: Transmembrane protein 33 homolog (290 aa).

Disordered stretches follow at residues 1 to 22 (MSSP…EFTG) and 39 to 72 (IDPN…SPRA). A compositionally biased stretch (low complexity) spans 45–72 (SSNNTTTQRPSTSSSSRTSSSSTSSPRA). 4 helical membrane-spanning segments follow: residues 83 to 103 (LYGA…FYFI), 109 to 129 (FFYK…FNTF), 150 to 170 (FVFY…YLLP), and 218 to 238 (IVLI…LVFI).

The protein belongs to the PER33/POM33 family.

The protein localises to the membrane. This chain is Transmembrane protein 33 homolog (tmem33), found in Dictyostelium discoideum (Social amoeba).